Reading from the N-terminus, the 64-residue chain is Hypoxia-inducible lipid droplet-associated protein (64 aa).

Residues 1 to 37 form a required for targeting to lipid droplets region; the sequence is MKFMLNLYVLGIMLTLLSIFVRVMESLGGLLESPLPG. Residues 7–24 form a helical membrane-spanning segment; the sequence is LYVLGIMLTLLSIFVRVM. Residues 42–51 show a composition bias toward polar residues; the sequence is TRGQLANTQP. The tract at residues 42-64 is disordered; the sequence is TRGQLANTQPPKGLPDHPSRGVQ. Over residues 55 to 64 the composition is skewed to basic and acidic residues; it reads LPDHPSRGVQ.

It is found in the lipid droplet. Its subcellular location is the secreted. The protein localises to the membrane. Functionally, increases intracellular lipid accumulation. Stimulates expression of cytokines including IL6, MIF and VEGFA. Enhances cell growth and proliferation. The chain is Hypoxia-inducible lipid droplet-associated protein (Hilpda) from Mus musculus (Mouse).